Here is a 578-residue protein sequence, read N- to C-terminus: Arginine--tRNA ligase (578 aa).

The 'HIGH' region signature appears at 127–137 (PNLAKEMHVGH).

This sequence belongs to the class-I aminoacyl-tRNA synthetase family. In terms of assembly, monomer.

Its subcellular location is the cytoplasm. It catalyses the reaction tRNA(Arg) + L-arginine + ATP = L-arginyl-tRNA(Arg) + AMP + diphosphate. This is Arginine--tRNA ligase from Pseudomonas putida (strain ATCC 47054 / DSM 6125 / CFBP 8728 / NCIMB 11950 / KT2440).